Reading from the N-terminus, the 164-residue chain is Lipoprotein signal peptidase (164 aa).

Helical transmembrane passes span 12–32, 70–90, and 102–122; these read WLWLVVVVLIIDLGSKYLILQ, WFFAGIAIGISVILVVMMYRS, and ALIIGGALGNLFDRLWHGFVV. Active-site residues include Asp-123 and Asp-141. Residues 137-157 traverse the membrane as a helical segment; it reads FNLADTAICVGAALIVLEGFL.

Belongs to the peptidase A8 family.

The protein resides in the cell inner membrane. The catalysed reaction is Release of signal peptides from bacterial membrane prolipoproteins. Hydrolyzes -Xaa-Yaa-Zaa-|-(S,diacylglyceryl)Cys-, in which Xaa is hydrophobic (preferably Leu), and Yaa (Ala or Ser) and Zaa (Gly or Ala) have small, neutral side chains.. It participates in protein modification; lipoprotein biosynthesis (signal peptide cleavage). This protein specifically catalyzes the removal of signal peptides from prolipoproteins. The chain is Lipoprotein signal peptidase from Escherichia coli O6:K15:H31 (strain 536 / UPEC).